Here is a 319-residue protein sequence, read N- to C-terminus: Pantothenate kinase (319 aa).

ATP is bound at residue 97–104 (GSVAVGKS).

The protein belongs to the prokaryotic pantothenate kinase family.

The protein resides in the cytoplasm. It catalyses the reaction (R)-pantothenate + ATP = (R)-4'-phosphopantothenate + ADP + H(+). The protein operates within cofactor biosynthesis; coenzyme A biosynthesis; CoA from (R)-pantothenate: step 1/5. The sequence is that of Pantothenate kinase from Chelativorans sp. (strain BNC1).